The chain runs to 238 residues: MRPNNRAINQPRPIKITRHYTKHAEGSVLVEFGDTKVLCTATVDESVPRFLKGQGQGWVTAEYGMLPRSTHSRMQREAAKGKQGGRTMEIQRLIARSLRAMVDLEALGERSVTLDCDVIQADGGTRTASITGACVALIDAVNGLVDNGTLTVSPLKGLVAAISVGIVDGTPVCDLEYVEDSAAETDMNVVMMEDGRMIEVQGTAEGEPFSHEELLTLLNLAKQGCKRIFEAQRAALAD.

Phosphate-binding positions include Arg86 and 124-126 (GTR).

This sequence belongs to the RNase PH family. In terms of assembly, homohexameric ring arranged as a trimer of dimers.

It catalyses the reaction tRNA(n+1) + phosphate = tRNA(n) + a ribonucleoside 5'-diphosphate. Phosphorolytic 3'-5' exoribonuclease that plays an important role in tRNA 3'-end maturation. Removes nucleotide residues following the 3'-CCA terminus of tRNAs; can also add nucleotides to the ends of RNA molecules by using nucleoside diphosphates as substrates, but this may not be physiologically important. Probably plays a role in initiation of 16S rRNA degradation (leading to ribosome degradation) during starvation. This is Ribonuclease PH from Actinobacillus succinogenes (strain ATCC 55618 / DSM 22257 / CCUG 43843 / 130Z).